A 287-amino-acid chain; its full sequence is MEIRGIFGVKVGMSQVFTTNNERLPITVIYCEPNQVAGVKTEAKDKYSATLLSFDTVENKKLNKPQQGFFEKNNLKPTKHLQEIRNMTGFEMGQQITPQNLFQVGEYVDVSAISKGRGFTGAIKRWNFKIGPLGHGAGYPHRFQGSVQAGRGGASAQRVFKGKKMSGHYGHEKVTVQNLRIVGFDEANMLVLVSGAIAGPEGGVVLIRTAKKKPGVVKPIELAVQTEKAPEAKPAKLSKKKQAKELAKAQAANQQTVEAKVDTPVVEPKPTEVKKAAPVVEKKGEDK.

Residues 228 to 287 (KAPEAKPAKLSKKKQAKELAKAQAANQQTVEAKVDTPVVEPKPTEVKKAAPVVEKKGEDK) are disordered. The span at 269 to 287 (KPTEVKKAAPVVEKKGEDK) shows a compositional bias: basic and acidic residues.

The protein belongs to the universal ribosomal protein uL3 family. In terms of assembly, part of the 50S ribosomal subunit. Forms a cluster with proteins L14 and L19.

Functionally, one of the primary rRNA binding proteins, it binds directly near the 3'-end of the 23S rRNA, where it nucleates assembly of the 50S subunit. This Mycoplasma pneumoniae (strain ATCC 29342 / M129 / Subtype 1) (Mycoplasmoides pneumoniae) protein is Large ribosomal subunit protein uL3.